The chain runs to 80 residues: Raniseptin-7 (80 aa).

The first 22 residues, 1–22 (MAFLKKSLFLVLFLGIVSLSIC), serve as a signal peptide directing secretion. Positions 23–49 (EEEKREGEEEEKQEEENEELSEEELRE) are excised as a propeptide. A disordered region spans residues 27–46 (REGEEEEKQEEENEELSEEE). Residues 30–44 (EEEEKQEEENEELSE) are compositionally biased toward acidic residues.

The protein belongs to the frog skin active peptide (FSAP) family. Dermaseptin subfamily. In terms of tissue distribution, expressed by the skin glands.

Its subcellular location is the secreted. Has antibacterial activity. The polypeptide is Raniseptin-7 (Boana raniceps (Chaco tree frog)).